A 132-amino-acid polypeptide reads, in one-letter code: ATP synthase epsilon chain (132 aa).

It belongs to the ATPase epsilon chain family. As to quaternary structure, F-type ATPases have 2 components, CF(1) - the catalytic core - and CF(0) - the membrane proton channel. CF(1) has five subunits: alpha(3), beta(3), gamma(1), delta(1), epsilon(1). CF(0) has four main subunits: a, b, b' and c.

The protein resides in the cellular chromatophore membrane. In terms of biological role, produces ATP from ADP in the presence of a proton gradient across the membrane. The chain is ATP synthase epsilon chain (atpC) from Rhodobacter capsulatus (Rhodopseudomonas capsulata).